The following is a 210-amino-acid chain: MFIKICGIKTVEELKIVEKYADATGVILKSTSKREISFEKAKELIEIAKIPIYAVSTVNTYDDWAKIIEKTGTKYIQIHSNMDLNEIIKLKNNYNVNIIKAFKVPSISPNPEKDAENLINDIMQYDNIVDKILLDTGKGTGKTHDLRISKILSEKIDIVLAGGLNPYNVKEIVEIIKPCGVDLSSGVEKDNKKDEELIKLFIKNLKYNDK.

The protein belongs to the TrpF family.

It catalyses the reaction N-(5-phospho-beta-D-ribosyl)anthranilate = 1-(2-carboxyphenylamino)-1-deoxy-D-ribulose 5-phosphate. It participates in amino-acid biosynthesis; L-tryptophan biosynthesis; L-tryptophan from chorismate: step 3/5. This chain is N-(5'-phosphoribosyl)anthranilate isomerase, found in Methanococcus aeolicus (strain ATCC BAA-1280 / DSM 17508 / OCM 812 / Nankai-3).